A 400-amino-acid chain; its full sequence is Na(+)/H(+) antiporter NhaA (400 aa).

The next 11 membrane-spanning stretches (helical) occupy residues Ala26 to Leu46, Leu71 to Val91, Ile107 to Ile127, Gly137 to Ser157, Ile166 to Phe186, His189 to Leu209, Ala225 to Ile245, Phe273 to Val293, Pro299 to Phe319, Ile340 to Leu360, and Leu373 to Leu393.

This sequence belongs to the NhaA Na(+)/H(+) (TC 2.A.33) antiporter family.

The protein resides in the cell inner membrane. It carries out the reaction Na(+)(in) + 2 H(+)(out) = Na(+)(out) + 2 H(+)(in). Functionally, na(+)/H(+) antiporter that extrudes sodium in exchange for external protons. This is Na(+)/H(+) antiporter NhaA from Haemophilus influenzae (strain ATCC 51907 / DSM 11121 / KW20 / Rd).